We begin with the raw amino-acid sequence, 398 residues long: MTTNTVSRKVAWLRVVTLAIAAFIFNTTEFVPVGLLSDIAQSFQMETAQVGIMLTIYAWVVALMSLPFMLLTSQMERRKLLIGLFVLFIASHVLSFLAWNFNVLVISRIGIAFAHAIFWSITASLAIRLAPAGKRAQALSLLATGTALAMVLGLPIGRIVGQYFGWRTTFFAIGLGALITLLCLIKLLPKLPSEHSGSLKSLPLLFRRPALMSIYLLTVVVVTAHYTAYSYIEPFVQVVAGFSANFATVLLLILGGAGIIGSVLFGKLGNKHASLLVSSAIGLLLACLLLLMPAAQSETHLAILSIFWGVAIMIIGLGMQVKVLALAPDATDVAMSLFSGIFNIGIGAGALVGNQISLHLSMSAIGYLGAIPALAALIWSILIFRKWPVALEEQPHHG.

The next 12 helical transmembrane spans lie at 15–35, 50–70, 81–101, 103–123, 136–156, 169–189, 209–229, 246–266, 275–295, 301–321, 333–353, and 364–384; these read VVTL…PVGL, VGIM…PFML, LIGL…AWNF, VLVI…SITA, AQAL…GLPI, TFFA…KLLP, PALM…YTAY, FATV…VLFG, LLVS…MPAA, LAIL…GMQV, VAMS…ALVG, and AIGY…ILIF.

It belongs to the major facilitator superfamily. SotB (TC 2.A.1.2) family.

It localises to the cell inner membrane. In terms of biological role, involved in the efflux of sugars. The physiological role may be the reduction of the intracellular concentration of toxic sugars or sugar metabolites. This is Probable sugar efflux transporter from Enterobacter sp. (strain 638).